The sequence spans 557 residues: Potassium-transporting ATPase potassium-binding subunit (557 aa).

Transmembrane regions (helical) follow at residues 5–25 (GFLL…PLGS), 63–83 (LCAI…MLLG), 132–152 (GLTV…FALI), 170–190 (LLRI…LFFI), 253–273 (FVQM…FGEV), 283–303 (LLWA…WAEV), 329–349 (VLVS…AVIA), 356–376 (ALGG…FGGV), 379–399 (GLYG…LMIG), 416–436 (LTAL…ALAM), 484–504 (LLAF…MAIA), and 526–546 (LFVG…FIPA).

Belongs to the KdpA family. In terms of assembly, the system is composed of three essential subunits: KdpA, KdpB and KdpC.

Its subcellular location is the cell inner membrane. In terms of biological role, part of the high-affinity ATP-driven potassium transport (or Kdp) system, which catalyzes the hydrolysis of ATP coupled with the electrogenic transport of potassium into the cytoplasm. This subunit binds the periplasmic potassium ions and delivers the ions to the membrane domain of KdpB through an intramembrane tunnel. The chain is Potassium-transporting ATPase potassium-binding subunit from Escherichia coli O157:H7.